The primary structure comprises 466 residues: Cysteine--tRNA ligase (466 aa).

C28 is a binding site for Zn(2+). Residues 30-40 (PTVYNFFHIGN) carry the 'HIGH' region motif. Residues C208, H233, and E237 each contribute to the Zn(2+) site. The 'KMSKS' region motif lies at 265–269 (KMSKS). K268 is a binding site for ATP.

Belongs to the class-I aminoacyl-tRNA synthetase family. Monomer. Zn(2+) serves as cofactor.

The protein localises to the cytoplasm. The catalysed reaction is tRNA(Cys) + L-cysteine + ATP = L-cysteinyl-tRNA(Cys) + AMP + diphosphate. The sequence is that of Cysteine--tRNA ligase from Clostridium perfringens (strain 13 / Type A).